Consider the following 238-residue polypeptide: Ubiquinone biosynthesis O-methyltransferase (238 aa).

4 residues coordinate S-adenosyl-L-methionine: Arg-40, Gly-59, Asp-81, and Met-126.

This sequence belongs to the methyltransferase superfamily. UbiG/COQ3 family.

It catalyses the reaction a 3-demethylubiquinol + S-adenosyl-L-methionine = a ubiquinol + S-adenosyl-L-homocysteine + H(+). The enzyme catalyses a 3-(all-trans-polyprenyl)benzene-1,2-diol + S-adenosyl-L-methionine = a 2-methoxy-6-(all-trans-polyprenyl)phenol + S-adenosyl-L-homocysteine + H(+). The protein operates within cofactor biosynthesis; ubiquinone biosynthesis. Its function is as follows. O-methyltransferase that catalyzes the 2 O-methylation steps in the ubiquinone biosynthetic pathway. The polypeptide is Ubiquinone biosynthesis O-methyltransferase (Neisseria meningitidis serogroup A / serotype 4A (strain DSM 15465 / Z2491)).